Reading from the N-terminus, the 65-residue chain is Protein C13 (65 aa).

The protein belongs to the poxviridae C13 protein family.

In Vaccinia virus (strain Copenhagen) (VACV), this protein is Protein C13.